We begin with the raw amino-acid sequence, 364 residues long: MEAVTGILNTTIAVVFTWVGYKTARIIWKYTPYSYPNARIKAMEAKLLTEQKFNELAESRTLQNFVVNLEDTDYKDYLADVSSYTVEEVEKALERALAGTYELMFKILPKRSKGFFELLLEGWDVRNIANVVKAKLANEPASDYVVELGTMLPKVKAMAEAKTLEEILVILEGTPYEEVYQKLLLGEIDVTRFETELYRMHYGKLLSYALSRKDDERIILEEFVRLSIDRVNILTALRAKKAGLSAEEIKPMLIPGGTVKLDPLLHVDSFDMALAELDSTKYGQVIRDVREEIEKDLSVLEKALNDHIIERISELERFYPLSIATPLSYVLRREREIRKLRAIAKLIENGVEPERIKELAGEVA.

It belongs to the V-ATPase V0D/AC39 subunit family. In terms of assembly, has multiple subunits with at least A(3), B(3), C, D, E, F, H, I and proteolipid K(x).

The protein localises to the cell membrane. In terms of biological role, component of the A-type ATP synthase that produces ATP from ADP in the presence of a proton gradient across the membrane. This is A-type ATP synthase subunit C from Desulfurococcus sp. (strain SY).